The sequence spans 215 residues: Probable transaldolase (215 aa).

Lysine 83 acts as the Schiff-base intermediate with substrate in catalysis.

This sequence belongs to the transaldolase family. Type 3B subfamily.

It localises to the cytoplasm. It carries out the reaction D-sedoheptulose 7-phosphate + D-glyceraldehyde 3-phosphate = D-erythrose 4-phosphate + beta-D-fructose 6-phosphate. It participates in carbohydrate degradation; pentose phosphate pathway; D-glyceraldehyde 3-phosphate and beta-D-fructose 6-phosphate from D-ribose 5-phosphate and D-xylulose 5-phosphate (non-oxidative stage): step 2/3. Functionally, transaldolase is important for the balance of metabolites in the pentose-phosphate pathway. This is Probable transaldolase from Clostridium perfringens (strain 13 / Type A).